We begin with the raw amino-acid sequence, 242 residues long: Stress response regulator protein 1 (242 aa).

The Response regulatory domain maps to 118–236 (NFLLVDDNFI…FDHIITCIEK (119 aa)). At D169 the chain carries 4-aspartylphosphate.

In terms of biological role, required for stress adaptation, morphogenesis and virulence. This Debaryomyces hansenii (strain ATCC 36239 / CBS 767 / BCRC 21394 / JCM 1990 / NBRC 0083 / IGC 2968) (Yeast) protein is Stress response regulator protein 1 (SRR1).